The primary structure comprises 570 residues: Glutamate--tRNA ligase (570 aa).

The 'HIGH' region signature appears at 105–115; it reads PNPDGAFHLGN.

Belongs to the class-I aminoacyl-tRNA synthetase family. Glutamate--tRNA ligase type 2 subfamily.

It localises to the cytoplasm. The catalysed reaction is tRNA(Glu) + L-glutamate + ATP = L-glutamyl-tRNA(Glu) + AMP + diphosphate. In terms of biological role, catalyzes the attachment of glutamate to tRNA(Glu) in a two-step reaction: glutamate is first activated by ATP to form Glu-AMP and then transferred to the acceptor end of tRNA(Glu). The protein is Glutamate--tRNA ligase of Pyrococcus horikoshii (strain ATCC 700860 / DSM 12428 / JCM 9974 / NBRC 100139 / OT-3).